The chain runs to 450 residues: NADH-ubiquinone oxidoreductase chain 2 (450 aa).

13 helical membrane passes run 25–45 (GTIT…IVAM), 58–78 (LTPY…MLLM), 90–110 (SPFY…FPLV), 113–133 (LIAL…LTGL), 145–165 (LLYF…SYFV), 186–206 (AFDY…MAPL), 219–239 (TYIT…WIFA), 248–268 (VTIL…LFQV), 272–292 (TMLA…MMSY), 295–315 (AFYI…LGML), 344–364 (LAFS…TPGF), 385–405 (AIVV…KVLF), and 414–436 (NFIN…SFFM).

It belongs to the complex I subunit 2 family.

It is found in the mitochondrion inner membrane. It catalyses the reaction a ubiquinone + NADH + 5 H(+)(in) = a ubiquinol + NAD(+) + 4 H(+)(out). Core subunit of the mitochondrial membrane respiratory chain NADH dehydrogenase (Complex I) that is believed to belong to the minimal assembly required for catalysis. Complex I functions in the transfer of electrons from NADH to the respiratory chain. The immediate electron acceptor for the enzyme is believed to be ubiquinone. The polypeptide is NADH-ubiquinone oxidoreductase chain 2 (ND2) (Debaryomyces hansenii (strain ATCC 36239 / CBS 767 / BCRC 21394 / JCM 1990 / NBRC 0083 / IGC 2968) (Yeast)).